A 389-amino-acid chain; its full sequence is Lipid-A-disaccharide synthase (389 aa).

The protein belongs to the LpxB family.

The enzyme catalyses a lipid X + a UDP-2-N,3-O-bis[(3R)-3-hydroxyacyl]-alpha-D-glucosamine = a lipid A disaccharide + UDP + H(+). Its pathway is bacterial outer membrane biogenesis; LPS lipid A biosynthesis. In terms of biological role, condensation of UDP-2,3-diacylglucosamine and 2,3-diacylglucosamine-1-phosphate to form lipid A disaccharide, a precursor of lipid A, a phosphorylated glycolipid that anchors the lipopolysaccharide to the outer membrane of the cell. In Paraburkholderia phymatum (strain DSM 17167 / CIP 108236 / LMG 21445 / STM815) (Burkholderia phymatum), this protein is Lipid-A-disaccharide synthase.